Consider the following 305-residue polypeptide: uncharacterized protein (305 aa).

10 helical membrane passes run 11–31 (LLLAFLVIMWGVNWPLSKAAL), 37–57 (LLFAGIRTLIGGLLLVIVALP), 70–90 (IYLVSALLNITLFYGLQTIGL), 97–117 (LFSAIVFFQPVLMGVFSWLWL), 126–146 (VIGLILGFAGVAVISAAGFGG), 148–168 (ISVIGVLLALGSAVSWALGTV), 180–200 (IWMVALQLTIGSVFLLISGFW), 217–237 (LLFISVFVIALGWLVFFTLVG), 244–264 (VASYTFLIPLISIVASSIFLH), and 265–285 (EPLTLSLLAGLLLIVTSICLV). EamA domains lie at 18–141 (IMWG…VISA) and 161–287 (VSWA…LVNT).

It belongs to the EamA transporter family.

Its subcellular location is the cell membrane. This is an uncharacterized protein from Bacillus subtilis (strain 168).